Reading from the N-terminus, the 195-residue chain is Guanylate kinase (195 aa).

The Guanylate kinase-like domain maps to 5 to 183 (GILFVISGPS…ALQKITAIII (179 aa)). An ATP-binding site is contributed by 12–19 (GPSGVGKG).

It belongs to the guanylate kinase family.

The protein localises to the cytoplasm. The enzyme catalyses GMP + ATP = GDP + ADP. Functionally, essential for recycling GMP and indirectly, cGMP. The chain is Guanylate kinase from Syntrophomonas wolfei subsp. wolfei (strain DSM 2245B / Goettingen).